We begin with the raw amino-acid sequence, 297 residues long: tRNA-cytidine(32) 2-sulfurtransferase (297 aa).

The PP-loop motif signature appears at 45-50 (SGGKDS). [4Fe-4S] cluster contacts are provided by cysteine 120, cysteine 123, and cysteine 211.

It belongs to the TtcA family. As to quaternary structure, homodimer. Mg(2+) serves as cofactor. [4Fe-4S] cluster is required as a cofactor.

The protein localises to the cytoplasm. It carries out the reaction cytidine(32) in tRNA + S-sulfanyl-L-cysteinyl-[cysteine desulfurase] + AH2 + ATP = 2-thiocytidine(32) in tRNA + L-cysteinyl-[cysteine desulfurase] + A + AMP + diphosphate + H(+). Its pathway is tRNA modification. In terms of biological role, catalyzes the ATP-dependent 2-thiolation of cytidine in position 32 of tRNA, to form 2-thiocytidine (s(2)C32). The sulfur atoms are provided by the cysteine/cysteine desulfurase (IscS) system. This is tRNA-cytidine(32) 2-sulfurtransferase from Vibrio campbellii (strain ATCC BAA-1116).